A 75-amino-acid polypeptide reads, in one-letter code: Acyl carrier protein (75 aa).

The Carrier domain occupies 1-75 (MALFDDVKEV…GDAIKFIENV (75 aa)). At S36 the chain carries O-(pantetheine 4'-phosphoryl)serine.

This sequence belongs to the acyl carrier protein (ACP) family. Post-translationally, 4'-phosphopantetheine is transferred from CoA to a specific serine of apo-ACP by AcpS. This modification is essential for activity because fatty acids are bound in thioester linkage to the sulfhydryl of the prosthetic group.

It is found in the cytoplasm. Its pathway is lipid metabolism; fatty acid biosynthesis. Its function is as follows. Carrier of the growing fatty acid chain in fatty acid biosynthesis. This chain is Acyl carrier protein, found in Sulfurovum sp. (strain NBC37-1).